A 142-amino-acid polypeptide reads, in one-letter code: Nucleoside diphosphate kinase (142 aa).

Positions 11, 59, 87, 93, 104, and 114 each coordinate ATP. The Pros-phosphohistidine intermediate role is filled by H117.

The protein belongs to the NDK family. As to quaternary structure, homotetramer. The cofactor is Mg(2+).

The protein resides in the cytoplasm. It catalyses the reaction a 2'-deoxyribonucleoside 5'-diphosphate + ATP = a 2'-deoxyribonucleoside 5'-triphosphate + ADP. It carries out the reaction a ribonucleoside 5'-diphosphate + ATP = a ribonucleoside 5'-triphosphate + ADP. Major role in the synthesis of nucleoside triphosphates other than ATP. The ATP gamma phosphate is transferred to the NDP beta phosphate via a ping-pong mechanism, using a phosphorylated active-site intermediate. In Yersinia pseudotuberculosis serotype O:1b (strain IP 31758), this protein is Nucleoside diphosphate kinase.